The primary structure comprises 302 residues: Deoxyribonuclease-1-like 1 (302 aa).

Residues 1-18 (MHYPTALLFLILVNGAQA) form the signal peptide. Catalysis depends on residues E97 and H148. C187 and C224 form a disulfide bridge. N-linked (GlcNAc...) asparagine glycosylation is present at N261.

The protein belongs to the DNase I family.

The protein resides in the endoplasmic reticulum. The protein is Deoxyribonuclease-1-like 1 (DNASE1L1) of Chlorocebus aethiops (Green monkey).